Reading from the N-terminus, the 523-residue chain is tRNA-2-methylthio-N(6)-dimethylallyladenosine synthase (523 aa).

Positions 1–26 (MNEKQRLEQTGQIQTASHPADRKSDL) are disordered. Residues 8–17 (EQTGQIQTAS) show a composition bias toward polar residues. Positions 80-198 (RKFYIRTYGC…LPYILHEAYM (119 aa)) constitute an MTTase N-terminal domain. [4Fe-4S] cluster is bound by residues C89, C125, C159, C235, C239, and C242. Residues 221-451 (RKGNIKAWVN…NALVQEIAAK (231 aa)) enclose the Radical SAM core domain. In terms of domain architecture, TRAM spans 454 to 517 (KQYEGQVVEV…TWTLTGELAN (64 aa)).

This sequence belongs to the methylthiotransferase family. MiaB subfamily. Monomer. [4Fe-4S] cluster serves as cofactor.

The protein resides in the cytoplasm. It carries out the reaction N(6)-dimethylallyladenosine(37) in tRNA + (sulfur carrier)-SH + AH2 + 2 S-adenosyl-L-methionine = 2-methylsulfanyl-N(6)-dimethylallyladenosine(37) in tRNA + (sulfur carrier)-H + 5'-deoxyadenosine + L-methionine + A + S-adenosyl-L-homocysteine + 2 H(+). Its function is as follows. Catalyzes the methylthiolation of N6-(dimethylallyl)adenosine (i(6)A), leading to the formation of 2-methylthio-N6-(dimethylallyl)adenosine (ms(2)i(6)A) at position 37 in tRNAs that read codons beginning with uridine. The protein is tRNA-2-methylthio-N(6)-dimethylallyladenosine synthase of Geobacillus thermodenitrificans (strain NG80-2).